The primary structure comprises 439 residues: Dolichyl-diphosphooligosaccharide--protein glycosyltransferase 48 kDa subunit (439 aa).

The N-terminal stretch at Met1 to Ala25 is a signal peptide. Over Gly27–Pro410 the chain is Lumenal. Residues Tyr411–Leu430 traverse the membrane as a helical segment. Residues His431–Asp439 lie on the Cytoplasmic side of the membrane.

This sequence belongs to the DDOST 48 kDa subunit family. Component of the oligosaccharyltransferase (OST) complex. OST exists in two different complex forms which contain common core subunits RPN1, RPN2, OST48, OST4, DAD1 and TMEM258, either STT3A or STT3B as catalytic subunits, and form-specific accessory subunits. STT3A complex assembly occurs through the formation of 3 subcomplexes. Subcomplex 1 contains RPN1 and TMEM258, subcomplex 2 contains the STT3A-specific subunits STT3A, DC2/OSTC, and KCP2 as well as the core subunit OST4, and subcomplex 3 contains RPN2, DAD1, and OST48. The STT3A complex can form stable complexes with the Sec61 complex or with both the Sec61 and TRAP complexes. Interacts with SMIM22.

Its subcellular location is the endoplasmic reticulum membrane. The protein operates within protein modification; protein glycosylation. Its function is as follows. Subunit of the oligosaccharyl transferase (OST) complex that catalyzes the initial transfer of a defined glycan (Glc(3)Man(9)GlcNAc(2) in eukaryotes) from the lipid carrier dolichol-pyrophosphate to an asparagine residue within an Asn-X-Ser/Thr consensus motif in nascent polypeptide chains, the first step in protein N-glycosylation. N-glycosylation occurs cotranslationally and the complex associates with the Sec61 complex at the channel-forming translocon complex that mediates protein translocation across the endoplasmic reticulum (ER). All subunits are required for a maximal enzyme activity. Required for the assembly of both SST3A- and SS3B-containing OST complexes. This Sus scrofa (Pig) protein is Dolichyl-diphosphooligosaccharide--protein glycosyltransferase 48 kDa subunit.